The following is a 185-amino-acid chain: MIKDILNKSEEKMLKSISVLKKDLGSMKAGKANPAMLDRVNVEYYGSETPINQLANVSSPEPRVLLIQPWDKNSLKDIEKAILQSDLGLNPSNDGSVIRLIIPELTEETRKDIVKKVKKIGEESKIAIRSIRREGNDKIKNLKKNNDITEDEAKEGESSVQKITDKYITEIDNIVSAKEKEVMSV.

The protein belongs to the RRF family.

Its subcellular location is the cytoplasm. Its function is as follows. Responsible for the release of ribosomes from messenger RNA at the termination of protein biosynthesis. May increase the efficiency of translation by recycling ribosomes from one round of translation to another. This chain is Ribosome-recycling factor, found in Clostridium novyi (strain NT).